The following is a 32-amino-acid chain: Protamine-3A (32 aa).

The disordered stretch occupies residues 1–32 (PRRRRRSSSRPIRRRRRPRVSRRRRRGGRRRR).

As to expression, testis.

It is found in the nucleus. The protein resides in the chromosome. In terms of biological role, protamines substitute for histones in the chromatin of sperm during the haploid phase of spermatogenesis. They compact sperm DNA into a highly condensed, stable and inactive complex. The chain is Protamine-3A from Oncorhynchus mykiss (Rainbow trout).